The chain runs to 194 residues: Protein phosphatase 1 regulatory subunit 1B (194 aa).

Residue Met-1 is modified to N-acetylmethionine. The interval 1-194 (MDPKDRKKIQ…GEEPQHPSPP (194 aa)) is disordered. Thr-34 is subject to Phosphothreonine; by PKA. Basic and acidic residues predominate over residues 41 to 63 (VSEHSSPEEEASPHQRTSGEGHH). Residues Ser-45 and Ser-46 each carry the phosphoserine modification. Position 75 is a phosphothreonine (Thr-75). The span at 84–95 (HLQTISNLSENQ) shows a compositional bias: polar residues. Phosphoserine occurs at positions 97 and 130. Acidic residues predominate over residues 113 to 131 (QEDDEEDEDEEEDEEEDSQ). Basic and acidic residues predominate over residues 160 to 170 (PPLDEPQRDGN). A Phosphoserine modification is found at Ser-192.

This sequence belongs to the protein phosphatase inhibitor 1 family. In terms of processing, dopamine- and cyclic AMP-regulated neuronal phosphoprotein. Post-translationally, phosphorylation of Thr-34 is required for activity.

It is found in the cytoplasm. Inhibitor of protein-phosphatase 1. The sequence is that of Protein phosphatase 1 regulatory subunit 1B (Ppp1r1b) from Mus musculus (Mouse).